A 507-amino-acid chain; its full sequence is Ribosomal protein uS12 methylthiotransferase RimO (507 aa).

Positions 13–124 (RRVALLTLGC…ISDRLGAVLA (112 aa)) constitute an MTTase N-terminal domain. Positions 22, 58, and 87 each coordinate [4Fe-4S] cluster. Positions 150–175 (AAVSLPGHGTRAAAAGPGGRSAPVEV) are disordered. Over residues 155 to 172 (PGHGTRAAAAGPGGRSAP) the composition is skewed to low complexity. Positions 191-422 (LDTGPVASLK…ALADELCAQR (232 aa)) constitute a Radical SAM core domain. [4Fe-4S] cluster-binding residues include cysteine 205, cysteine 209, and cysteine 212. In terms of domain architecture, TRAM spans 424 to 497 (EQRLGSTVQV…GVDLVAVPDG (74 aa)).

The protein belongs to the methylthiotransferase family. RimO subfamily. [4Fe-4S] cluster serves as cofactor.

The protein localises to the cytoplasm. It catalyses the reaction L-aspartate(89)-[ribosomal protein uS12]-hydrogen + (sulfur carrier)-SH + AH2 + 2 S-adenosyl-L-methionine = 3-methylsulfanyl-L-aspartate(89)-[ribosomal protein uS12]-hydrogen + (sulfur carrier)-H + 5'-deoxyadenosine + L-methionine + A + S-adenosyl-L-homocysteine + 2 H(+). In terms of biological role, catalyzes the methylthiolation of an aspartic acid residue of ribosomal protein uS12. The sequence is that of Ribosomal protein uS12 methylthiotransferase RimO from Salinispora arenicola (strain CNS-205).